We begin with the raw amino-acid sequence, 103 residues long: Co-chaperonin GroES (103 aa).

This sequence belongs to the GroES chaperonin family. Heptamer of 7 subunits arranged in a ring. Interacts with the chaperonin GroEL.

Its subcellular location is the cytoplasm. Together with the chaperonin GroEL, plays an essential role in assisting protein folding. The GroEL-GroES system forms a nano-cage that allows encapsulation of the non-native substrate proteins and provides a physical environment optimized to promote and accelerate protein folding. GroES binds to the apical surface of the GroEL ring, thereby capping the opening of the GroEL channel. The protein is Co-chaperonin GroES of Rippkaea orientalis (strain PCC 8801 / RF-1) (Cyanothece sp. (strain PCC 8801)).